Consider the following 378-residue polypeptide: MAKRDYYEVLGVSKSASKDEIKKAYRKLSKQYHPDINKEEGADEKFKEISEAYEVLSDENKRANYDQFGHDGPQGGFGGQGFGGQDFSGFGGGGFEDIFSSFFGGGRQQRDPNAPRKGDDLQYTMTVTFDEAVFGSEKEISIRKDVACHTCDGEGAKPGTKKKTCHYCNGSGHVSVEQNTILGRVRTEKVCPVCSGSGQEFEEPCPTCHGKGTENKNVKISVTIPEGVDNEQQIRLAGEGAPGENGGPQGDLYIVFRVKPSEKFERDGDDIYYSLDISIAQATLGDEVKVPTLKGSVMLTIPAGTQTEKQFRLKEKGIKNVHGYGYGDLFININVVTPTKISDRQKELLREFAEIDGEELSEQPSNFRDKAKRFFKGE.

Residues 5 to 69 enclose the J domain; it reads DYYEVLGVSK…NKRANYDQFG (65 aa). The segment at 135–217 adopts a CR-type zinc-finger fold; it reads GSEKEISIRK…CHGKGTENKN (83 aa). Zn(2+) contacts are provided by Cys148, Cys151, Cys165, Cys168, Cys191, Cys194, Cys205, and Cys208. 4 CXXCXGXG motif repeats span residues 148 to 155, 165 to 172, 191 to 198, and 205 to 212; these read CHTCDGEG, CHYCNGSG, CPVCSGSG, and CPTCHGKG.

This sequence belongs to the DnaJ family. In terms of assembly, homodimer. Zn(2+) is required as a cofactor.

It is found in the cytoplasm. Its function is as follows. Participates actively in the response to hyperosmotic and heat shock by preventing the aggregation of stress-denatured proteins and by disaggregating proteins, also in an autonomous, DnaK-independent fashion. Unfolded proteins bind initially to DnaJ; upon interaction with the DnaJ-bound protein, DnaK hydrolyzes its bound ATP, resulting in the formation of a stable complex. GrpE releases ADP from DnaK; ATP binding to DnaK triggers the release of the substrate protein, thus completing the reaction cycle. Several rounds of ATP-dependent interactions between DnaJ, DnaK and GrpE are required for fully efficient folding. Also involved, together with DnaK and GrpE, in the DNA replication of plasmids through activation of initiation proteins. The polypeptide is Chaperone protein DnaJ (Staphylococcus saprophyticus subsp. saprophyticus (strain ATCC 15305 / DSM 20229 / NCIMB 8711 / NCTC 7292 / S-41)).